Here is a 273-residue protein sequence, read N- to C-terminus: uncharacterized protein (273 aa).

The span at 1–10 shows a compositional bias: basic residues; sequence MSSKKVKYNP. Disordered stretches follow at residues 1-32 and 50-124; these read MSSK…FGFN and EDVE…QSSP. Composition is skewed to polar residues over residues 12-24, 55-64, and 92-124; these read KSAS…SASA, QSFNGKSSNL, and PQSS…QSSP. Ser123 carries the phosphoserine modification.

It is found in the nucleus. The protein resides in the cytoplasm. Its subcellular location is the cytoskeleton. The protein localises to the spindle. This is an uncharacterized protein from Schizosaccharomyces pombe (strain 972 / ATCC 24843) (Fission yeast).